Reading from the N-terminus, the 275-residue chain is 3-methyl-2-oxobutanoate hydroxymethyltransferase (275 aa).

Residues D49 and D88 each contribute to the Mg(2+) site. 3-methyl-2-oxobutanoate contacts are provided by residues 49–50, D88, and K118; that span reads DS. Position 120 (E120) interacts with Mg(2+). Residue E187 is the Proton acceptor of the active site.

It belongs to the PanB family. Homodecamer; pentamer of dimers. Requires Mg(2+) as cofactor.

Its subcellular location is the cytoplasm. The catalysed reaction is 3-methyl-2-oxobutanoate + (6R)-5,10-methylene-5,6,7,8-tetrahydrofolate + H2O = 2-dehydropantoate + (6S)-5,6,7,8-tetrahydrofolate. It functions in the pathway cofactor biosynthesis; (R)-pantothenate biosynthesis; (R)-pantoate from 3-methyl-2-oxobutanoate: step 1/2. Functionally, catalyzes the reversible reaction in which hydroxymethyl group from 5,10-methylenetetrahydrofolate is transferred onto alpha-ketoisovalerate to form ketopantoate. The protein is 3-methyl-2-oxobutanoate hydroxymethyltransferase of Brucella melitensis biotype 1 (strain ATCC 23456 / CCUG 17765 / NCTC 10094 / 16M).